We begin with the raw amino-acid sequence, 159 residues long: Ribosomal RNA large subunit methyltransferase H (159 aa).

S-adenosyl-L-methionine contacts are provided by residues Leu76, Gly108, and 127–132 (FSKMTF).

Belongs to the RNA methyltransferase RlmH family. In terms of assembly, homodimer.

The protein localises to the cytoplasm. It carries out the reaction pseudouridine(1915) in 23S rRNA + S-adenosyl-L-methionine = N(3)-methylpseudouridine(1915) in 23S rRNA + S-adenosyl-L-homocysteine + H(+). Its function is as follows. Specifically methylates the pseudouridine at position 1915 (m3Psi1915) in 23S rRNA. The chain is Ribosomal RNA large subunit methyltransferase H from Lachnospira eligens (strain ATCC 27750 / DSM 3376 / VPI C15-48 / C15-B4) (Eubacterium eligens).